The sequence spans 32 residues: Ferredoxin (32 aa).

In terms of domain architecture, 2Fe-2S ferredoxin-type spans 3–32 (YKVRLLSEAEGIDVTIDCADDVYILDAAEE).

This sequence belongs to the 2Fe2S plant-type ferredoxin family. It depends on [2Fe-2S] cluster as a cofactor.

Its subcellular location is the plastid. The protein resides in the chloroplast. Functionally, ferredoxins are iron-sulfur proteins that transfer electrons in a wide variety of metabolic reactions. The chain is Ferredoxin from Porphyridium purpureum (Red alga).